The following is a 663-amino-acid chain: Nuclear receptor-binding protein homolog (663 aa).

The span at 1–14 (MSNSQANAGSSGSA) shows a compositional bias: low complexity. Positions 1 to 112 (MSNSQANAGS…SEDESEILEE (112 aa)) are disordered. The span at 19–46 (LNPSGSATLVPNLTTTNASSQATPASTI) shows a compositional bias: polar residues. Low complexity-rich tracts occupy residues 47–57 (PQQQQPQQSQP) and 81–94 (VVVAGGSEGVNLDS). Acidic residues predominate over residues 101–111 (DDSEDESEILE). Residues 122 to 392 (REEVDQRDVP…ANDLLFHPLL (271 aa)) form the Protein kinase domain. Disordered stretches follow at residues 481–505 (PNFRSRAASPERADSVKSATPEPVD) and 638–663 (YVPQDQQQYQQQQQEADVDQSGTTSN). Ser489, Ser495, and Ser498 each carry phosphoserine. Phosphothreonine is present on Thr500. Over residues 641 to 652 (QDQQQYQQQQQE) the composition is skewed to low complexity.

This sequence belongs to the protein kinase superfamily. Ser/Thr protein kinase family.

Its subcellular location is the cytoplasm. It is found in the cell cortex. May play a role in subcellular trafficking between the endoplasmic reticulum and Golgi apparatus. The chain is Nuclear receptor-binding protein homolog from Drosophila pseudoobscura pseudoobscura (Fruit fly).